The primary structure comprises 511 residues: mRNA export factor (511 aa).

Positions 1–15 (MATDIDMLIDLGLDL) are enriched in low complexity. Residues 1-244 (MATDIDMLID…ERKAPAADTI (244 aa)) form a disordered region. The Nuclear export signal signature appears at 5 to 17 (IDMLIDLGLDLSD). 2 positions are modified to phosphoserine; by host: Ser-16 and Ser-18. 2 stretches are compositionally biased toward acidic residues: residues 16–26 (SDSDLDEDPPE) and 35–51 (LESDSSGECSSSDEDME). Residues 104-112 (VWSRLGARR) are interaction with host ALYREF. The short motif at 110–138 (ARRPSCSPEQHGGKVARLQPPPTKAQPAR) is the Nuclear localization signal element. Ser-114 bears the Phosphoserine; by host mark. Arg-138 is modified (dimethylated arginine; by host). Residues 138–152 (RGGRRGRRRGRGRGG) form an RGG-box region. Residues 139–149 (GGRRGRRRGRG) are compositionally biased toward basic residues. Residue Arg-148 is modified to Omega-N-methylarginine; by host. Residue Arg-150 is modified to Dimethylated arginine; by host. A compositionally biased stretch (pro residues) spans 213–232 (APPPLMTLAIAPPPADPRAP). Zn(2+)-binding residues include Cys-399, His-478, Cys-482, and Cys-487. The CHC2-type zinc finger occupies 399-487 (CYLKARGLCG…HRQECSSRVC (89 aa)).

The protein belongs to the HHV-1 ICP27 protein family. In terms of assembly, interacts with host RBP1; this interaction facilitates the RNA polymerase recruitment to viral transcription sites. Interacts (via the RGG box) with host ALYREF/THOC4; this interaction recruits ALYREF to viral replication compartments and probably directs viral mRNA to the TAP/NFX1 pathway. Interacts (via the RGG box) with host SRPK1; this interaction relocalizes SRPK1 to the nucleus and seems to alter its activity. Interacts with ICP4; this interaction modulates ICP4 DNA-binding activity. Interacts with host NXF1; this interaction allows efficient export of HSV-1 early and late transcripts. Methylated within the RGG box possibly by host PRMT1. When hypomethylated, ICP27 is exported to the cytoplasm earlier and more rapidly. In terms of processing, phosphorylated.

It localises to the host cytoplasm. Its subcellular location is the host nucleus. Functionally, multifunctional regulator of the expression of viral genes that contributes to the shutoff of host protein synthesis and mediates nuclear export of viral intronless mRNAs. Early in infection, this immediate early (EI) protein mediates the inhibition of cellular splicing. This results in the accumulation of unprocessed 3'end pre-mRNAs which can't be exported from the nucleus. Cellular protein synthesis is thereby shut off early after virus infection. Later in the infection, it helps recruit cellular RNA polymerase II to viral replication sites and promotes the nuclear export of viral intronless mRNAs by interacting with mRNAs and host NXF1/TAP. ICP27 binds to NUP62 which may provide facilitated viral mRNA export and may compete with some host cell transport receptors for binding and inhibit cellular nucleocytoplasmic transport pathways. Also stimulates translation of viral transcripts. Repression of host gene expression blocks the cell cycle at the G1 phase and prevents apoptosis. Seems to silence the 3' splice site of the promyelocytic leukemia (PML) intron 7a, thereby switching PML isoforms from PML-II to PML-V. This could be linked to the accelerated mRNA export induced by ICP27 which might not provide sufficient time for PML pre-mRNA to be spliced in the nucleus. This chain is mRNA export factor, found in Human herpesvirus 1 (strain HFEM) (HHV-1).